The sequence spans 1001 residues: uncharacterized protein (1001 aa).

Residues K939–S948 show a composition bias toward basic and acidic residues. The segment at K939–N1001 is disordered. S948 and S950 each carry phosphoserine.

This is an uncharacterized protein from Schizosaccharomyces pombe (strain 972 / ATCC 24843) (Fission yeast).